Consider the following 173-residue polypeptide: Alpha-crystallin A chain (173 aa).

M1 bears the N-acetylmethionine mark. Positions 1-63 (MDIAIQHPWF…RSVLDSGISE (63 aa)) are required for complex formation with BFSP1 and BFSP2. Residue Q6 is modified to Deamidated glutamine; partial. Phosphoserine is present on S45. A Deamidated glutamine; partial modification is found at Q50. The 111-residue stretch at 52 to 162 (LFRSVLDSGI…GHSERAIPVS (111 aa)) folds into the sHSP domain. K70 carries the N6-acetyllysine modification. The residue at position 90 (Q90) is a Deamidated glutamine; partial. K99 is subject to N6-acetyllysine. H100 lines the Zn(2+) pocket. Residue N101 is modified to Deamidated asparagine; partial. 2 residues coordinate Zn(2+): E102 and H107. S122 carries the phosphoserine modification. N123 is subject to Deamidated asparagine; partial. The segment at 144–173 (PKVTSGMDAGHSERAIPVSREEKPSSAPSS) is disordered. Over residues 153–167 (GHSERAIPVSREEKP) the composition is skewed to basic and acidic residues. Zn(2+) is bound at residue H154. Residue S162 is glycosylated (O-linked (GlcNAc) serine).

It belongs to the small heat shock protein (HSP20) family. Heteromer composed of three CRYAA and one CRYAB subunits. Inter-subunit bridging via zinc ions enhances stability, which is crucial as there is no protein turn over in the lens. Can also form homodimers and homotetramers (dimers of dimers) which serve as the building blocks of homooligomers. Within homooligomers, the zinc-binding motif is created from residues of 3 different molecules. His-100 and Glu-102 from one molecule are ligands of the zinc ion, and His-107 and His-154 residues from additional molecules complete the site with tetrahedral coordination geometry. Part of a complex required for lens intermediate filament formation composed of BFSP1, BFSP2 and CRYAA. Acetylation at Lys-70 may increase chaperone activity. In terms of processing, undergoes age-dependent proteolytical cleavage at the C-terminus.

It localises to the cytoplasm. Its subcellular location is the nucleus. In terms of biological role, contributes to the transparency and refractive index of the lens. Acts as a chaperone, preventing aggregation of various proteins under a wide range of stress conditions. Required for the correct formation of lens intermediate filaments as part of a complex composed of BFSP1, BFSP2 and CRYAA. The protein is Alpha-crystallin A chain (CRYAA) of Phocoena phocoena (Harbor porpoise).